The chain runs to 203 residues: uncharacterized protein (203 aa).

A signal peptide spans methionine 1–alanine 31.

This is an uncharacterized protein from Bacillus subtilis (strain 168).